A 132-amino-acid chain; its full sequence is Myelin P2 protein (132 aa).

An N-acetylserine modification is found at Ser2. A (9Z)-octadecenoate-binding site is contributed by Arg107. Hexadecanoate is bound at residue Arg107. A disulfide bond links Cys118 and Cys125. Position 127-129 (127-129 (RIY)) interacts with (9Z)-octadecenoate. 127-129 (RIY) is a hexadecanoate binding site.

This sequence belongs to the calycin superfamily. Fatty-acid binding protein (FABP) family. In terms of assembly, monomer.

The protein resides in the cytoplasm. In terms of biological role, may play a role in lipid transport protein in Schwann cells. May bind cholesterol. The chain is Myelin P2 protein (PMP2) from Bos taurus (Bovine).